We begin with the raw amino-acid sequence, 428 residues long: G2/mitotic-specific cyclin-1 (428 aa).

A disordered region spans residues 1 to 22; the sequence is MKFSEEKNVSNNPTNFEGGLDS.

It belongs to the cyclin family. Cyclin AB subfamily. Interacts with the CDC2 protein kinase to form a serine/threonine kinase holoenzyme complex also known as maturation promoting factor (MPF). The cyclin subunit imparts substrate specificity to the complex.

Its function is as follows. Essential for the control of the cell cycle at the G2/M (mitosis) transition. The protein is G2/mitotic-specific cyclin-1 of Medicago sativa subsp. varia (Alfalfa).